The primary structure comprises 604 residues: Elongation factor 4 (604 aa).

The tr-type G domain occupies 7–189 (SKIRNFCIIA…SIVHLVPPPS (183 aa)). GTP is bound by residues 19 to 24 (DHGKST) and 136 to 139 (NKID).

This sequence belongs to the TRAFAC class translation factor GTPase superfamily. Classic translation factor GTPase family. LepA subfamily.

The protein localises to the cell inner membrane. It catalyses the reaction GTP + H2O = GDP + phosphate + H(+). In terms of biological role, required for accurate and efficient protein synthesis under certain stress conditions. May act as a fidelity factor of the translation reaction, by catalyzing a one-codon backward translocation of tRNAs on improperly translocated ribosomes. Back-translocation proceeds from a post-translocation (POST) complex to a pre-translocation (PRE) complex, thus giving elongation factor G a second chance to translocate the tRNAs correctly. Binds to ribosomes in a GTP-dependent manner. In Synechococcus elongatus (strain ATCC 33912 / PCC 7942 / FACHB-805) (Anacystis nidulans R2), this protein is Elongation factor 4.